The following is a 292-amino-acid chain: (S)-phenoxypropionate/alpha-ketoglutarate-dioxygenase (292 aa).

Fe cation-binding residues include histidine 108 and aspartate 110. 2-oxoglutarate contacts are provided by threonine 135 and tryptophan 247. Histidine 262 provides a ligand contact to Fe cation. Position 273 (arginine 273) interacts with 2-oxoglutarate.

The protein belongs to the TfdA dioxygenase family. In terms of assembly, monomer. Fe cation is required as a cofactor. L-ascorbate serves as cofactor.

It catalyses the reaction (S)-2-(4-chloro-2-methylphenoxy)propanoate + 2-oxoglutarate + O2 = 2-methyl-4-chlorophenol + pyruvate + succinate + CO2. It carries out the reaction (S)-(2,4-dichlorophenoxy)propanoate + 2-oxoglutarate + O2 = 2,4-dichlorophenol + pyruvate + succinate + CO2. It functions in the pathway xenobiotic degradation; 2-(2,4-dichlorophenoxy)propanoate degradation. Inhibited by divalent cations, most significantly by copper and nickel, and by diethylpyrocarbonate (DEPC). Its function is as follows. Involved in the degradation of the phenoxypropionate herbicides. Catalyzes the enantiospecific cleavage of the ether bond in the herbicid S-dichlorprop ((S)-2-(2,4-dichlorophenoxy)propionate)(S-2,4-DP) and S-mecoprop ((S)-2-(4-chloro-2-methylphenoxy)propionate)(S-2,4-MCPP). It can also accept (RS)-2-(4-chlorophenoxy)propionate, (RS)-2-(m-chlorophenoxy)propionate and phenoxyacetate derivatives such as 2,4-dichlorophenoxyacetate (2,4-D), however it can only accept 2-oxoglutarate as oxygen acceptor. This is (S)-phenoxypropionate/alpha-ketoglutarate-dioxygenase from Delftia acidovorans (Pseudomonas acidovorans).